An 82-amino-acid chain; its full sequence is Small ribosomal subunit protein uS17c (82 aa).

Belongs to the universal ribosomal protein uS17 family. As to quaternary structure, part of the 30S ribosomal subunit.

It localises to the plastid. The protein resides in the chloroplast. Functionally, one of the primary rRNA binding proteins, it binds specifically to the 5'-end of 16S ribosomal RNA. The protein is Small ribosomal subunit protein uS17c (rps17) of Emiliania huxleyi (Coccolithophore).